The sequence spans 307 residues: tRNA dimethylallyltransferase (307 aa).

9 to 16 (GPTAVGKT) serves as a coordination point for ATP. 11–16 (TAVGKT) provides a ligand contact to substrate. Residues 34–37 (DSMQ) form an interaction with substrate tRNA region.

This sequence belongs to the IPP transferase family. As to quaternary structure, monomer. Mg(2+) is required as a cofactor.

It carries out the reaction adenosine(37) in tRNA + dimethylallyl diphosphate = N(6)-dimethylallyladenosine(37) in tRNA + diphosphate. Functionally, catalyzes the transfer of a dimethylallyl group onto the adenine at position 37 in tRNAs that read codons beginning with uridine, leading to the formation of N6-(dimethylallyl)adenosine (i(6)A). The sequence is that of tRNA dimethylallyltransferase from Limosilactobacillus fermentum (strain NBRC 3956 / LMG 18251) (Lactobacillus fermentum).